Reading from the N-terminus, the 223-residue chain is Serine/threonine/tyrosine-interacting protein (223 aa).

Residues 28 to 176 (EMQEILPGLF…LQEYEAIYLA (149 aa)) form the Tyrosine-protein phosphatase domain. Residues 76–78 (FQQ) carry the Interaction with FBXW7 motif. 3 positions are modified to phosphoserine: S184, S193, and S201. Residues 197-223 (GTTGSLKRTHEEEDDFGTMQVATAQNG) form a disordered region.

Belongs to the protein-tyrosine phosphatase family. Non-receptor class subfamily. As to quaternary structure, interacts with MAPK1; independently of MAPK1 phosphorylation status. Interacts with CARHSP1/Crhsp-24. Interacts (via FQQ motif) with FBXW7 (via F-box domain); the interaction is direct and prevents FBXW7 interaction with SKP1, a component of the SCF(FBXW7) complex.

It is found in the nucleus. Its subcellular location is the cytoplasm. The protein resides in the cytosol. Its function is as follows. Catalytically inactive phosphatase. Acts as a nuclear anchor for MAPK1/MAPK3 (ERK1/ERK2). Modulates cell-fate decisions and cell migration by spatiotemporal regulation of MAPK1/MAPK3 (ERK1/ERK2). By binding to the F-box of FBXW7, prevents the assembly of FBXW7 into the SCF E3 ubiquitin-protein ligase complex, and thereby inhibits degradation of its substrates. Plays a role in spermatogenesis. The sequence is that of Serine/threonine/tyrosine-interacting protein (STYX) from Pongo abelii (Sumatran orangutan).